We begin with the raw amino-acid sequence, 165 residues long: Protein C2-DOMAIN ABA-RELATED 8 (165 aa).

An N-acetylmethionine modification is found at methionine 1. The region spanning 1–106 (MENLVGLLRI…QGTDIQELTN (106 aa)) is the C2 domain. Ca(2+) is bound by residues arginine 21, aspartate 22, aspartate 27, aspartate 73, lysine 74, aspartate 75, and aspartate 81.

This sequence belongs to the plant CAR protein family. In terms of assembly, binds to PYR/PYL/RCAR abscisic acid intracellular receptors in an ABA-independent manner, both at the plasma membrane and in the nucleus.

It is found in the cell membrane. The protein localises to the nucleus. Stimulates the GTPase/ATPase activities of Obg-like ATPases. Mediates the transient calcium-dependent interaction of PYR/PYL/RCAR abscisic acid (ABA) receptors with the plasma membrane and thus regulates ABA sensitivity. This Arabidopsis thaliana (Mouse-ear cress) protein is Protein C2-DOMAIN ABA-RELATED 8.